Here is a 486-residue protein sequence, read N- to C-terminus: MSQHSQYDAPGVPVQPSLSFTQGFLLGQLSVVLLIGAFIKFFIFGEAPAPPSRGLASRTASHHRSYSINQGDNNVSNNNTSGGSPRTLCEKPSTSNVLRPVPSSATNTRSILRKTYYNAIPTQFSHTKQGRHRIQHSTHQPESLDWFNVLIAQTIAQYRQTAYLLKDSPTSSILDSLSAAINDPQKKPSFIDTIKVTDISLGEEFPIFSNCRVIVVDDPNSDGGRLQALMDVDLSDDNLSLAIETSLILNYPKPRSAVLPVALSVSVVRFSGTLCISLIPAATEQSPSSAPTPDASNLNVRTLFQHISAELNGTAANPTANPEKKGVPKTNLAFSFLPDYRLDLSVRSLIGSRSRLQDVPKVAQLVEARIHSWFEERVVEPRVQVVGLPDFWPRKGRTGVRPGEDAEAAAAVAAASASSRGGAPEATPSVPEEAIIDDSPVRPGLRFRGPAGRYDSGSSFDELPRAGPGLGEPLDIPGSMPGGRAQ.

Residues methionine 1 to glycine 23 are Lumenal-facing. The chain crosses the membrane as a helical span at residues phenylalanine 24–phenylalanine 44. Residues glycine 45 to glutamine 486 are Cytoplasmic-facing. Residues serine 52–serine 103 are disordered. Over residues serine 67–serine 84 the composition is skewed to low complexity. A compositionally biased stretch (polar residues) spans proline 92 to serine 103. The 250-residue stretch at glutamine 140–proline 389 folds into the SMP-LTD domain. Positions alanine 413–alanine 426 are enriched in low complexity. Residues alanine 413–glutamine 486 form a disordered region.

Belongs to the MMM1 family. As to quaternary structure, homodimer. Component of the ER-mitochondria encounter structure (ERMES) or MDM complex, composed of mmm1, mdm10, mdm12 and mdm34. A mmm1 homodimer associates with one molecule of mdm12 on each side in a pairwise head-to-tail manner, and the SMP-LTD domains of mmm1 and mdm12 generate a continuous hydrophobic tunnel for phospholipid trafficking.

The protein localises to the endoplasmic reticulum membrane. Its function is as follows. Component of the ERMES/MDM complex, which serves as a molecular tether to connect the endoplasmic reticulum (ER) and mitochondria. Components of this complex are involved in the control of mitochondrial shape and protein biogenesis, and function in nonvesicular lipid trafficking between the ER and mitochondria. The mdm12-mmm1 subcomplex functions in the major beta-barrel assembly pathway that is responsible for biogenesis of all outer membrane beta-barrel proteins, and acts in a late step after the SAM complex. The mdm10-mdm12-mmm1 subcomplex further acts in the TOM40-specific pathway after the action of the mdm12-mmm1 complex. Essential for establishing and maintaining the structure of mitochondria and maintenance of mtDNA nucleoids. The protein is Maintenance of mitochondrial morphology protein 1 of Talaromyces marneffei (strain ATCC 18224 / CBS 334.59 / QM 7333) (Penicillium marneffei).